A 507-amino-acid chain; its full sequence is FLYWCH transcription factor 1 (507 aa).

Positions 1 to 26 (MYSPESMNSNISSPSPPSSSSLNAPS) are enriched in low complexity. A disordered region spans residues 1 to 51 (MYSPESMNSNISSPSPPSSSSLNAPSLADAPEVRSDDGEAETSEPSTSVTA). The segment at 135–192 (KKTRLKVFSNGFFMTFDKLSSCQKKYFWRCEYKNTCKARMHTDIVTEKILTFIHEHNH) adopts an FLYWCH-type zinc-finger fold.

Its function is as follows. Probable transcription factor. Binds to the DNA sequence motif 5'-[AG]GGCGCCG-3' in the promoters of target genes, including micro-RNA genes, in order to repress expression, and acting redundantly with flh-2. This is FLYWCH transcription factor 1 from Caenorhabditis elegans.